The chain runs to 394 residues: Xylose isomerase (394 aa).

Catalysis depends on residues His-54 and Asp-57. Positions 180, 216, 219, 244, 254, 256, and 285 each coordinate Mg(2+). The tract at residues 370 to 394 is disordered; the sequence is VRTPRPAGDGPPAGRARLTVAPRKR. Residues 373-386 show a composition bias toward low complexity; sequence PRPAGDGPPAGRAR.

This sequence belongs to the xylose isomerase family. Homotetramer. Mg(2+) serves as cofactor.

It localises to the cytoplasm. It catalyses the reaction alpha-D-xylose = alpha-D-xylulofuranose. Its function is as follows. Involved in D-xylose catabolism. In Streptomyces rochei (Streptomyces parvullus), this protein is Xylose isomerase (xylA).